We begin with the raw amino-acid sequence, 203 residues long: MTQVNEMEIELKEPLIPVEEYLAAGVHIGTQQKSEDMKKFIYRVRGDGLYILDIRETDARIKTVAKFLTQYEAPEILVVTSRQYGQYPAKKFADTIGAMSATGRFIPGLLTNPVLDGYIEPKVIVVTDPIGDAQVINEAVQCGIPVVALCDTNNMTKFVDLVIPTNNKGRKALSMIYFLLTREMLRIRGIATSLTQEDFETEI.

It belongs to the universal ribosomal protein uS2 family.

This is Small ribosomal subunit protein uS2 from Methanoregula boonei (strain DSM 21154 / JCM 14090 / 6A8).